A 280-amino-acid chain; its full sequence is DegV domain-containing protein spyM18_1709 (280 aa).

The region spanning 3–280 (WKIVTDSGCD…DGGLLMGYEI (278 aa)) is the DegV domain. 2 residues coordinate hexadecanoate: Ser-63 and Ser-91.

Its function is as follows. May bind long-chain fatty acids, such as palmitate, and may play a role in lipid transport or fatty acid metabolism. In Streptococcus pyogenes serotype M18 (strain MGAS8232), this protein is DegV domain-containing protein spyM18_1709.